Here is a 304-residue protein sequence, read N- to C-terminus: uncharacterized protein (304 aa).

Coiled coils occupy residues 3 to 35 (KNQYISQNMENKEIENKEIENKKTDSKEFDKEI) and 89 to 132 (KSNK…NSNL). Residues 96–121 (LQNKQQENSEEKNSEEKNSEEKNSEE) form a disordered region.

This is an uncharacterized protein from Acanthamoeba polyphaga (Amoeba).